Consider the following 1032-residue polypeptide: Importin beta-like protein KAP120 (1032 aa).

The residue at position 2 (Ala-2) is an N-acetylalanine. Residues 31-103 (AEQQLRQWET…RGRLFEMIDE (73 aa)) enclose the Importin N-terminal domain.

Belongs to the importin beta family. As to quaternary structure, interacts with GTP-bound GSP1 and RFP1. Associates with the nuclear pore complex.

Its subcellular location is the cytoplasm. It localises to the nucleus. Functions in nuclear protein import as nuclear transport receptor. Serves as receptor for nuclear localization signals (NLS) in cargo substrates. Thought to mediate docking of the importin/substrate complex to the nuclear pore complex (NPC) through binding to nucleoporin and the complex is subsequently translocated through the pore by an energy requiring, RAN-dependent mechanism. Required for nuclear import of Ho endonuclease and RFP1, and involved in rRNA-processing and assembly or export of 60S ribosomal subunits. This chain is Importin beta-like protein KAP120 (KAP120), found in Saccharomyces cerevisiae (strain ATCC 204508 / S288c) (Baker's yeast).